A 375-amino-acid polypeptide reads, in one-letter code: Heat-inducible transcription repressor HrcA (375 aa).

Residues 307–318 are compositionally biased toward low complexity; it reads ATDGATHAAASS. The disordered stretch occupies residues 307-331; the sequence is ATDGATHAAASSQTENQSGDDTRQA.

Belongs to the HrcA family.

Negative regulator of class I heat shock genes (grpE-dnaK-dnaJ and groELS operons). Prevents heat-shock induction of these operons. The sequence is that of Heat-inducible transcription repressor HrcA from Bifidobacterium adolescentis (strain ATCC 15703 / DSM 20083 / NCTC 11814 / E194a).